The chain runs to 190 residues: MFEKLKISLIEAPIIKKGDYNYFVHPITDGVPLVDPDVLKEAAEGIKKFGNLNVDKIVCVEAMGIHIATALSIITGIPFVVIRKRQYGLEGEVAVHQITGYSHGELYINGLKKGDKIILVDDVVSTGGTMIAVLKAMEKMGIEIVDVFAIVEKGEGKYIVEGETGFEVKSLVKVNVVDGKVQIEGSRDEN.

Belongs to the purine/pyrimidine phosphoribosyltransferase family. Archaeal HPRT subfamily. Homodimer.

It is found in the cytoplasm. It catalyses the reaction IMP + diphosphate = hypoxanthine + 5-phospho-alpha-D-ribose 1-diphosphate. The catalysed reaction is GMP + diphosphate = guanine + 5-phospho-alpha-D-ribose 1-diphosphate. The protein operates within purine metabolism; IMP biosynthesis via salvage pathway; IMP from hypoxanthine: step 1/1. Its function is as follows. Catalyzes a salvage reaction resulting in the formation of IMP that is energically less costly than de novo synthesis. The sequence is that of Hypoxanthine/guanine phosphoribosyltransferase from Methanobacterium lacus (strain AL-21).